The chain runs to 178 residues: Bifunctional protein PyrR (178 aa).

The PRPP-binding motif lies at 99 to 111 (VVLVDDVIYTGRT).

It belongs to the purine/pyrimidine phosphoribosyltransferase family. PyrR subfamily. As to quaternary structure, homodimer and homohexamer; in equilibrium.

The catalysed reaction is UMP + diphosphate = 5-phospho-alpha-D-ribose 1-diphosphate + uracil. Regulates transcriptional attenuation of the pyrimidine nucleotide (pyr) operon by binding in a uridine-dependent manner to specific sites on pyr mRNA. This disrupts an antiterminator hairpin in the RNA and favors formation of a downstream transcription terminator, leading to a reduced expression of downstream genes. In terms of biological role, also displays a weak uracil phosphoribosyltransferase activity which is not physiologically significant. The chain is Bifunctional protein PyrR from Thermoanaerobacter pseudethanolicus (strain ATCC 33223 / 39E) (Clostridium thermohydrosulfuricum).